We begin with the raw amino-acid sequence, 559 residues long: Glycerol kinase (559 aa).

An ADP-binding site is contributed by threonine 20. ATP is bound by residues threonine 20, serine 21, and serine 22. Threonine 20 is a sn-glycerol 3-phosphate binding site. Position 24 (arginine 24) interacts with ADP. 3 residues coordinate sn-glycerol 3-phosphate: arginine 94, glutamate 95, and tyrosine 148. Glycerol-binding residues include arginine 94, glutamate 95, and tyrosine 148. Glycine 252 is a binding site for beta-D-fructose 1,6-bisphosphate. Aspartate 265 contributes to the sn-glycerol 3-phosphate binding site. 2 residues coordinate glycerol: aspartate 265 and glutamine 266. Residues threonine 287, glycine 332, glycine 433, and asparagine 437 each coordinate ADP. Threonine 287, glycine 332, and glycine 433 together coordinate ATP. The helical transmembrane segment at 532–552 threads the bilayer; sequence IFCSLPLGFFIVSSMVMLIGA.

It belongs to the FGGY kinase family. As to expression, widely expressed in fetal and adult tissues. In terms of tissue distribution, the sole isoform expressed in adult liver and kidney.

It localises to the mitochondrion outer membrane. The protein localises to the nucleus. The protein resides in the cytoplasm. Its subcellular location is the cytosol. It catalyses the reaction glycerol + ATP = sn-glycerol 3-phosphate + ADP + H(+). Its pathway is polyol metabolism; glycerol degradation via glycerol kinase pathway; sn-glycerol 3-phosphate from glycerol: step 1/1. Potassium and magnesium-dependent. Functionally, kinase that plays a key role in glycerol metabolism, catalyzing its phosphorylation to produce sn-glycerol 3-phosphate. Sn-glycerol 3-phosphate is a crucial intermediate in various metabolic pathways, such as the synthesis of glycerolipids and triglycerides, glycogenesis, glycolysis and gluconeogenesis. This Homo sapiens (Human) protein is Glycerol kinase.